The following is an 89-amino-acid chain: Small ribosomal subunit protein uS15 (89 aa).

It belongs to the universal ribosomal protein uS15 family. As to quaternary structure, part of the 30S ribosomal subunit. Forms a bridge to the 50S subunit in the 70S ribosome, contacting the 23S rRNA.

Functionally, one of the primary rRNA binding proteins, it binds directly to 16S rRNA where it helps nucleate assembly of the platform of the 30S subunit by binding and bridging several RNA helices of the 16S rRNA. Forms an intersubunit bridge (bridge B4) with the 23S rRNA of the 50S subunit in the ribosome. The chain is Small ribosomal subunit protein uS15 from Methylorubrum populi (strain ATCC BAA-705 / NCIMB 13946 / BJ001) (Methylobacterium populi).